The chain runs to 233 residues: Lactate utilization protein C (233 aa).

Belongs to the LutC/YkgG family.

In terms of biological role, is involved in L-lactate degradation and allows cells to grow with lactate as the sole carbon source. The polypeptide is Lactate utilization protein C (Oceanobacillus iheyensis (strain DSM 14371 / CIP 107618 / JCM 11309 / KCTC 3954 / HTE831)).